The chain runs to 390 residues: Ammonium/H(+) antiporter subunit AmhT (390 aa).

10 helical membrane-spanning segments follow: residues 2-22 (VIPE…TGFV), 31-51 (VVIF…SHLL), 52-72 (HFAG…EFPL), 94-114 (FGVT…SLII), 143-163 (FMLG…AVLV), 178-198 (LLVV…VFLF), 212-232 (DLFI…ALYL), 266-286 (LLLP…EGIP), 288-308 (IPLL…VGVL), and 351-371 (VFIL…PSIA).

The protein belongs to the monovalent cation:proton antiporter 2 (CPA2) transporter (TC 2.A.37) family. As to quaternary structure, interacts with AmhM.

The protein resides in the cell membrane. AmhT alone exhibits antiport activity, but interaction with AmhM confers different properties, such as higher KM for potassium. In terms of biological role, ammonium/proton antiporter that mediates the efflux of ammonium ions. Can also transport potassium or rubidium, but not sodium or lithium. The polypeptide is Ammonium/H(+) antiporter subunit AmhT (amhT) (Alkalihalophilus pseudofirmus (strain ATCC BAA-2126 / JCM 17055 / OF4) (Bacillus pseudofirmus)).